A 207-amino-acid chain; its full sequence is Ribosome maturation factor RimM (207 aa).

One can recognise a PRC barrel domain in the interval 130-207 (EDEFYWVDLI…RIVVDWGLDY (78 aa)).

It belongs to the RimM family. In terms of assembly, binds ribosomal protein uS19.

It localises to the cytoplasm. Functionally, an accessory protein needed during the final step in the assembly of 30S ribosomal subunit, possibly for assembly of the head region. Essential for efficient processing of 16S rRNA. May be needed both before and after RbfA during the maturation of 16S rRNA. It has affinity for free ribosomal 30S subunits but not for 70S ribosomes. The chain is Ribosome maturation factor RimM from Cupriavidus taiwanensis (strain DSM 17343 / BCRC 17206 / CCUG 44338 / CIP 107171 / LMG 19424 / R1) (Ralstonia taiwanensis (strain LMG 19424)).